Here is a 99-residue protein sequence, read N- to C-terminus: Large ribosomal subunit protein uL23 (99 aa).

Contacts protein L29, and trigger factor when it is bound to the ribosome. Part of the 50S ribosomal subunit.

One of the early assembly proteins it binds 23S rRNA. One of the proteins that surrounds the polypeptide exit tunnel on the outside of the ribosome. Forms the main docking site for trigger factor binding to the ribosome. This is Large ribosomal subunit protein uL23 from Rhodopseudomonas palustris (strain ATCC BAA-98 / CGA009).